The chain runs to 63 residues: Large ribosomal subunit protein bL32 (63 aa).

Basic residues predominate over residues Met-1–Ala-18. The tract at residues Met-1 to Lys-25 is disordered.

Belongs to the bacterial ribosomal protein bL32 family.

In Chlorobium phaeovibrioides (strain DSM 265 / 1930) (Prosthecochloris vibrioformis (strain DSM 265)), this protein is Large ribosomal subunit protein bL32.